Reading from the N-terminus, the 148-residue chain is uncharacterized protein (148 aa).

This is an uncharacterized protein from Haemophilus influenzae (strain ATCC 51907 / DSM 11121 / KW20 / Rd).